The primary structure comprises 1331 residues: Beta-mannanase/endoglucanase A (1331 aa).

The N-terminal stretch at 1-41 is a signal peptide; that stretch reads MRLKTKIRKKWLSVLCTVVFLLNILFIANVTILPKVGAATS. Positions 42–325 are catalytic (mannanase); it reads NDGVVKIDTS…YKTNAIGTSS (284 aa). Residue Glu162 is the Proton donor of the active site. Residue Glu257 is the Nucleophile of the active site. Disordered stretches follow at residues 319 to 363, 515 to 566, and 717 to 780; these read NAIG…TPAT, PSGA…TPAT, and EPSG…PLPT. The segment covering 323–335 has biased composition (low complexity); the sequence is TSSTPTPTSTVTP. The CBM3 1 domain occupies 363 to 516; it reads TSGQIKVLYA…GVLVWGQEPS (154 aa). Pro residues-rich tracts occupy residues 521–541 and 551–561; these read APAP…PTVT and TPTPTPTPTPV. Positions 566-719 constitute a CBM3 2 domain; sequence TGGQIKVLYA…GVLVWGQEPS (154 aa). The segment covering 721 to 735 has biased composition (low complexity); the sequence is TTPSPTSTPTVTVTP. Composition is skewed to pro residues over residues 736 to 756 and 766 to 780; these read TPTP…PTVT and TPTP…PLPT. The interval 781–1331 is catalytic (endoglucanase); that stretch reads ISPSPSVVEI…RNLVFMRALV (551 aa).

It in the N-terminal section; belongs to the glycosyl hydrolase 5 (cellulase A) family. In the C-terminal section; belongs to the glycosyl hydrolase 44 (cellulase J) family.

It carries out the reaction Random hydrolysis of (1-&gt;4)-beta-D-mannosidic linkages in mannans, galactomannans and glucomannans.. The enzyme catalyses Endohydrolysis of (1-&gt;4)-beta-D-glucosidic linkages in cellulose, lichenin and cereal beta-D-glucans.. Its function is as follows. Degradation of hemicelluloses, the second most abundant polysaccharides in nature. Contains two catalytic domains with mannanase and endoglucanase activities. The protein is Beta-mannanase/endoglucanase A (manA) of Caldicellulosiruptor saccharolyticus (Caldocellum saccharolyticum).